Reading from the N-terminus, the 348-residue chain is Methylthioribose-1-phosphate isomerase (348 aa).

Substrate is bound by residues 46–48 (RGA), R88, and Q194. The Proton donor role is filled by D235. Residue 245 to 246 (NK) participates in substrate binding.

Belongs to the eIF-2B alpha/beta/delta subunits family. MtnA subfamily.

It carries out the reaction 5-(methylsulfanyl)-alpha-D-ribose 1-phosphate = 5-(methylsulfanyl)-D-ribulose 1-phosphate. It functions in the pathway amino-acid biosynthesis; L-methionine biosynthesis via salvage pathway; L-methionine from S-methyl-5-thio-alpha-D-ribose 1-phosphate: step 1/6. Catalyzes the interconversion of methylthioribose-1-phosphate (MTR-1-P) into methylthioribulose-1-phosphate (MTRu-1-P). The protein is Methylthioribose-1-phosphate isomerase of Desulforudis audaxviator (strain MP104C).